We begin with the raw amino-acid sequence, 502 residues long: Large ribosomal subunit protein uL2m (502 aa).

The disordered stretch occupies residues 458–502 (AMNPVDHPHGGGEGRTKGGRPSVSPWGKPTKAGFRAGVGVGKRRI). The segment covering 463–473 (DHPHGGGEGRT) has biased composition (basic and acidic residues). Residues 493–502 (AGVGVGKRRI) show a composition bias toward gly residues.

It belongs to the universal ribosomal protein uL2 family.

It is found in the mitochondrion. The sequence is that of Large ribosomal subunit protein uL2m (RPL2) from Oryza sativa (Rice).